The following is a 59-amino-acid chain: MDKELPKASPSEPALNIKKSGKSFKCKKPTKNVQVFLINRQLGRNRSDTDLSKWLWMLP.

The disordered stretch occupies residues 1 to 22 (MDKELPKASPSEPALNIKKSGK).

The polypeptide is Embryonic testis differentiation protein homolog C (Homo sapiens (Human)).